The chain runs to 218 residues: Ropporin-1-like protein (218 aa).

One can recognise an RIIa domain in the interval 17–54 (PELPDILKQFTKAAIRTQPADVLQWSAGYFSALSRGDP).

This sequence belongs to the ropporin family. Component of the axonemal radial spoke complex 1 (RS1), at least composed of spoke head proteins RSPH1, RSPH3, RSPH9 and the cilia-specific component RSPH4A or sperm-specific component RSPH6A, spoke stalk proteins RSPH14, DNAJB13, DYDC1, ROPN1L and NME5, and the anchor protein IQUB. May interact with AKAP3. Interacts with FSCB; the interaction increases upon spermatozoa capacitation conditions. Interacts with CFAP61. Sumoylated, sumoylation decreases upon spermatozoa capacitation conditions. As to expression, testis-specific. Expression is restricted to germ cells.

The protein resides in the cell projection. It is found in the cilium. It localises to the flagellum. Its function is as follows. Functions as part of axonemal radial spoke complexes that play an important part in the motility of sperm and cilia. Important for male fertility. With ROPN1, involved in fibrous sheath integrity and sperm motility, plays a role in PKA-dependent signaling processes required for spermatozoa capacitation. The chain is Ropporin-1-like protein (Ropn1l) from Mus musculus (Mouse).